Reading from the N-terminus, the 160-residue chain is Protein BOLA1, chloroplastic (160 aa).

Residues 1–50 constitute a chloroplast transit peptide; it reads MFSSSIRLIVSGFHRTQPLKSPVNSPSVFISVPKFFNSESKSTGTGSRSV. Over residues 39-61 the composition is skewed to polar residues; the sequence is ESKSTGTGSRSVAMSSVEKTGSD. The disordered stretch occupies residues 39-66; sequence ESKSTGTGSRSVAMSSVEKTGSDSGAIE.

It belongs to the bolA/yrbA family. Interacts in vitro with GRXS14, GRXS15, GRXS16 and GRXS17, but not with GRXC5. Interacts in vivo only with GRXS14 and GRXS16.

It localises to the plastid. The protein localises to the chloroplast. May act either alone or in interaction with glutaredoxin as a redox-regulated transcriptional regulator, or as a factor regulating Fe-S cluster biogenesis. The glutaredoxin-BOLA1 heterodimers bind a labile, oxygen sensitive iron-sulfur cluster. This Arabidopsis thaliana (Mouse-ear cress) protein is Protein BOLA1, chloroplastic.